The following is a 1872-amino-acid chain: Chitin synthase 6 (1872 aa).

Residues 1–23 (MAQHLPPVGGNGGAHTQPSLPAL) are disordered. Positions 1–779 (MAQHLPPVGG…CWMEIAQLSD (779 aa)) constitute a Myosin motor domain. 104–111 (GESGSGKT) is a binding site for ATP. Asn123, Asn291, Asn428, and Asn559 each carry an N-linked (GlcNAc...) asparagine glycan. The interval 587–652 (VMQASVSSKP…VNKPSEEGAS (66 aa)) is disordered. The actin-binding stretch occupies residues 659–683 (LDNVTKSFHAQNTNAYFVFCLKPND). Asn661 carries an N-linked (GlcNAc...) asparagine glycan. Transmembrane regions (helical) follow at residues 881–901 (WVFI…QHLG) and 920–940 (FIIW…PMLV). Residues 944-1003 (QYVFTGEELSAYNGKDGKASYAAIRGQVFDIGSFIPRHPLPYLPSKLFTQYAGTDITGLF) form the Cytochrome b5 heme-binding domain. N-linked (GlcNAc...) asparagine glycans are attached at residues Asn1030, Asn1055, and Asn1120. The helical transmembrane segment at 1193-1213 (FILAVTIILCSIIAFKFLAAL) threads the bilayer. 2 N-linked (GlcNAc...) asparagine glycosylation sites follow: Asn1450 and Asn1556. The next 3 helical transmembrane spans lie at 1581 to 1601 (FIVF…AYIV), 1614 to 1634 (VPVL…IIFI), and 1641 to 1661 (MIAW…GLPL). The 56-residue stretch at 1814–1869 (LPSDDALLAEIREILRTADLMTVTKKGVKQELERRFGVNLDSRRAYINSATEALLS) folds into the DEK-C domain.

It belongs to the chitin synthase family. Class V subfamily.

The protein localises to the cell membrane. The enzyme catalyses [(1-&gt;4)-N-acetyl-beta-D-glucosaminyl](n) + UDP-N-acetyl-alpha-D-glucosamine = [(1-&gt;4)-N-acetyl-beta-D-glucosaminyl](n+1) + UDP + H(+). Its function is as follows. Polymerizes chitin, a structural polymer of the cell wall and septum, by transferring the sugar moiety of UDP-GlcNAc to the non-reducing end of the growing chitin polymer. Required for appressorium penetration and invasive growth. This chain is Chitin synthase 6, found in Pyricularia oryzae (strain 70-15 / ATCC MYA-4617 / FGSC 8958) (Rice blast fungus).